We begin with the raw amino-acid sequence, 979 residues long: UPF0182 protein Mb0065 (979 aa).

7 helical membrane-spanning segments follow: residues 19 to 41 (LVTA…DIYV), 63 to 85 (LAIV…LLAY), 114 to 136 (LFGW…FDWV), 174 to 196 (WLFV…FGGL), 208 to 230 (AARV…AYWL), 261 to 280 (LVLV…AIFL), and 285 to 307 (IPAM…WPLL). Residues 898–948 (GTGRVATAPGGDAASAPPPGAGGPAPPQAVPPPRTTQPPAAPPRGPDVPPA) are disordered. Residues 902–912 (VATAPGGDAAS) are compositionally biased toward low complexity. A compositionally biased stretch (pro residues) spans 913-946 (APPPGAGGPAPPQAVPPPRTTQPPAAPPRGPDVP).

It belongs to the UPF0182 family.

The protein localises to the cell membrane. The chain is UPF0182 protein Mb0065 from Mycobacterium bovis (strain ATCC BAA-935 / AF2122/97).